The following is a 400-amino-acid chain: Renin (400 aa).

The signal sequence occupies residues 1-23 (MDAWRGMPRWGLLLLLWGSCTFG). A propeptide spans 24–60 (LPTETTTFKRISLKRMPSIRESLKERGVDMARLGPER) (activation peptide). The N-linked (GlcNAc...) asparagine glycan is linked to asparagine 65. A Peptidase A1 domain is found at 80–397 (YYGEIGIGTP…DRGNNRIGFA (318 aa)). Aspartate 98 is a catalytic residue. The cysteines at positions 111 and 118 are disulfide-linked. N-linked (GlcNAc...) asparagine glycosylation is present at asparagine 135. Cysteine 277 and cysteine 281 are disulfide-bonded. Residue aspartate 286 is part of the active site. The cysteines at positions 319 and 356 are disulfide-linked.

The protein belongs to the peptidase A1 family. In terms of assembly, interacts with ATP6AP2.

It is found in the secreted. The protein resides in the membrane. The catalysed reaction is Cleavage of Leu-|-Xaa bond in angiotensinogen to generate angiotensin I.. Interaction with ATP6AP2 results in a 5-fold increased efficiency in angiotensinogen processing. Renin is a highly specific endopeptidase, whose only known function is to generate angiotensin I from angiotensinogen in the plasma, initiating a cascade of reactions that produce an elevation of blood pressure and increased sodium retention by the kidney. In Callithrix jacchus (White-tufted-ear marmoset), this protein is Renin (REN).